We begin with the raw amino-acid sequence, 263 residues long: E3 ubiquitin-protein ligase SINA-like 8 (263 aa).

Residues 35-71 (CPICCEGLTCPIFQCENGHLACSSCCPKLRNKCPACP) form an RING-type; degenerate zinc finger. The segment at 75 to 261 (ILESILVTCP…IKLSIVETSN (187 aa)) is SBD. The SIAH-type zinc-finger motif lies at 78–136 (SILVTCPNDMFGCTESFLYGKKSTHEEECIFSLCSCPSLDCEYSGRYEDLYDHYKLTHI). Positions 83, 90, 102, 106, 113, 118, 130, and 135 each coordinate Zn(2+).

The protein belongs to the SINA (Seven in absentia) family.

The catalysed reaction is S-ubiquitinyl-[E2 ubiquitin-conjugating enzyme]-L-cysteine + [acceptor protein]-L-lysine = [E2 ubiquitin-conjugating enzyme]-L-cysteine + N(6)-ubiquitinyl-[acceptor protein]-L-lysine.. Its pathway is protein modification; protein ubiquitination. Functionally, E3 ubiquitin-protein ligase that mediates ubiquitination and subsequent proteasomal degradation of target proteins. E3 ubiquitin ligases accept ubiquitin from an E2 ubiquitin-conjugating enzyme in the form of a thioester and then directly transfers the ubiquitin to targeted substrates. It probably triggers the ubiquitin-mediated degradation of different substrates. This is E3 ubiquitin-protein ligase SINA-like 8 from Arabidopsis thaliana (Mouse-ear cress).